The chain runs to 108 residues: UPF0102 protein WS0451 (108 aa).

It belongs to the UPF0102 family.

In Wolinella succinogenes (strain ATCC 29543 / DSM 1740 / CCUG 13145 / JCM 31913 / LMG 7466 / NCTC 11488 / FDC 602W) (Vibrio succinogenes), this protein is UPF0102 protein WS0451.